We begin with the raw amino-acid sequence, 467 residues long: Ran-binding protein M homolog (467 aa).

A disordered region spans residues Met1 to Leu25. Positions Asn9–Leu25 are enriched in polar residues. Residues Asp31–Phe219 form the B30.2/SPRY domain. A LisH domain is found at Pro244–Val276. The 59-residue stretch at Ala295–Glu353 folds into the CTLH domain.

The protein belongs to the RANBP9/10 family. In terms of assembly, interacts with WDR36, WDS, GID8, MAEA and RMD5.

The protein resides in the cytoplasm. It is found in the nucleus. The protein localises to the perinuclear region. This is Ran-binding protein M homolog from Arabidopsis thaliana (Mouse-ear cress).